We begin with the raw amino-acid sequence, 478 residues long: SPbeta prophage-derived uncharacterized protein YonD (478 aa).

The stretch at 326–419 (IQSQLNQKDE…KFSTEEVQNL (94 aa)) forms a coiled coil.

The protein is SPbeta prophage-derived uncharacterized protein YonD (yonD) of Bacillus subtilis (strain 168).